We begin with the raw amino-acid sequence, 2327 residues long: MNTTDCFIAVVNAIREIRALFLPRTTGKMEFTLHDGEKKVFYSRPNNHDNCWLNTILQLFRYVDEPFFDWVYNSPENLTLEAIKQLEELTGLELREGGPPALVIWNIKHLLHTGIGTASRPSEVCMVDGTDMCLADFHAGIFMKGQEHAVFACVTSNGWYAIDDEDFYPWTPDPSDVLVFVPYDQEPLNEGWKANVQRKLKGAGQSSPATGSQNQSGNTGSIINNYYMQQYQNSMDTQLGDNAISGGSNEGSTDTTSTHTTNTQNNDWFSKLASSAFSGLFGALLADKKTEETTLLEDRILTTRNGHTTSTTQSSVGVTFGYATAEDSTSGPNTSGLETRVHQAERFFKMALFDWVPSQNFGHMHKVVLPHEPKGVYGGLVKSYAYMRNGWDVEVTAVGNQFNGGCLLVALVPEMGDISDREKYQLTLYPHQFINPRTNMTAHITVPYVGVNRYDQYKQHRPWTLVVMVVAPLTTNTAGAQQIKVYANIAPTNVHVAGELPSKEGIFPVACSDGYGNMVTTDPKTADPAYGKVYNPPRTALPGRFTNYLDVAEACPTFLMFENVPYVSTRTDGQRLLAKFDVSLAAKHMSNTYLAGLAQYYTQYTGTINLHFMFTGPTDAKARYMVAYVPPGMDAPDNPEEAAHCIHAEWDTGLNSKFTFSIPYISAADYAYTASHEAETTCVQGWVCVYQITHGKADADALVVSASAGKDFELRLPVDARQQTTATGESADPVTTTVENYGGETQVQRRHHTDVAFVLDRFVKVTVSGNQHTLDVMQAHKDNIVGALLRAATYYFSDLEIAVTHTGKLTWVPNGAPVSALDNTTNPTAYHKGPLTRLALPYTAPHRVLATAYTGTTTYTASTRGDSAHLTATRARHLPTSFNFGAVKAETITELLVRMKRAELYCPRPILPIQPTGDRHKQPLVAPAKQLLNFDLLKLAGDVESNPGPFFFSDVRSNFSKLVETINQMQEDMSTKHGPDFNRLVSAFEELASGVKAIRTGLDEAKPWYKLIKLLSRLSCMAAVAARSKDPVLVAIMLADTGLEILDSTFVVKKISDSLSSLFHVPAPAFSFGAPILLAGLVKVASSFFRSTPEDLERAEKQLKARDINDIFAILKNGEWLVKLILAIRDWIKAWIASEEKFVTMTDLVPGILEKQRDLNDPSKYKDAKEWLDNTRQACLKSGNVHIANLCKVVAPAPSKSRPEPVVVCLRGKSGQGKSFLANVLAQAISTHLTGRTDSVWYCPPDPDHFDGYNQQTVVVMDDLGQNPDGKDFKYFAQMVSTTGFIPPMASLEDKGKPFSSKVIIATTNLYSGFTPKTMVCPDALNRRFHFDIDVSAKDGYKINNKLDIIKALEDTHTNPVAMFQYDCALLNGMAVEMKRLQQDMFKPQPPLQNVYQLVQEVIERVELHEKVSSHPIFKQISIPSQKSVLYFLIEKGQHEAAIEFFEGMVHDSIKEELRPLIQQTSFVKRAFKRLKENFEIVALCLTLLANIVIMIRETHKRQKMVDDAVNEYIEKANITTDDKTLDEAEKNPLETSGASTVGFRERTLPGQKARDDVNSEPAQPTEEQPQAEGPYAGPLERQRPLKVRAKLPQQEGPYAGPMERQKPLKVKARAPVVKEGPYEGPVKKPVALKVKAKNLIVTESGAPPTDLQKMVMGNTKPVELILDGKTVAICCATGVFGTAYLVPRHLFAEKYDKIMLDGRALTDSDYRVFEFEIKVKGQDMLSDAALMVLHRGNRVRDITKHFRDVARMKKGTPVVGVINNADVGRLIFSGEALTYKDIVVCMDGDTMPGLFAYKAATKAGYCGGAVLAKDGADTFIVGTHSAGGNGVGYCSCVSRSMLLKMKAHIDPEPHHEGLIVDTRDVEERVHVMRKTKLAPTVAHGVFNPEFGPAALSNKDPRLNEGVVLDEVIFSKHKGDTKMSEEDKALFRRCAADYASRLHSVLGTANAPLSIYEAIKGVDGLDAMEPDTAPGLPWALQGKRRGALIDFENGTVGPEVEAALKLMEKREYKFACQTFLKDEIRPMEKVRAGKTRIVDVLPVEHILYTRMMIGRFCAQMHSNNGPQIGSAVGCNPDVDWQRFGTHFAQYRNVWDVDYSAFDANHCSDAMNIMFEEVFRTEFGFHPNAEWILKTLVNTEHAYENKRITVEGGMPSGCSATSIINTILNNIYVLYALRRHYEGVELDTYTMISYGDDIVVASDYDLDFEALKPHFKSLGQTITPADKSDKGFVLGHSITDVTFLKRHFHMDYGTGFYKPVMASKTLEAILSFARRGTIQEKLISVAGLAVHSGPDEYRRLFEPFQGLFEIPSYRSLYLRWVNAVCGDA.

The Peptidase C28 domain occupies 1–201; sequence MNTTDCFIAV…WKANVQRKLK (201 aa). Over 1 to 1475 the chain is Cytoplasmic; sequence MNTTDCFIAV…SFVKRAFKRL (1475 aa). Catalysis depends on for leader protease activity residues Cys-51, His-148, and Asp-163. 2 disordered regions span residues 199–218 and 238–265; these read KLKG…QSGN and QLGD…NTQN. Gly-202 carries N-myristoyl glycine; by host lipidation. Composition is skewed to polar residues over residues 204–218 and 238–251; these read GQSS…QSGN and QLGD…SNEG. The segment covering 252 to 265 has biased composition (low complexity); sequence STDTTSTHTTNTQN. Positions 787-795 are antigenic epitope; sequence ALLRAATYY. Positions 864–866 match the Cell attachment site motif; sequence RGD. In terms of domain architecture, SF3 helicase spans 1184–1348; that stretch reads NVHIANLCKV…DGYKINNKLD (165 aa). Residue 1212-1219 coordinates ATP; the sequence is GKSGQGKS. An intramembrane segment occupies 1476–1496; sequence KENFEIVALCLTLLANIVIMI. The Cytoplasmic portion of the chain corresponds to 1497–2327; that stretch reads RETHKRQKMV…RWVNAVCGDA (831 aa). Basic and acidic residues-rich tracts occupy residues 1524-1533 and 1544-1558; these read KTLDEAEKNP and FRER…RDDV. A disordered region spans residues 1524 to 1579; sequence KTLDEAEKNPLETSGASTVGFRERTLPGQKARDDVNSEPAQPTEEQPQAEGPYAGP. O-(5'-phospho-RNA)-tyrosine is present on residues Tyr-1576, Tyr-1599, and Tyr-1623. In terms of domain architecture, Peptidase C3 spans 1647-1843; that stretch reads APPTDLQKMV…YCSCVSRSML (197 aa). His-1690 serves as the catalytic For protease 3C activity; Proton donor/acceptor. Catalysis depends on for protease 3C activity residues Asp-1728 and Cys-1807. The Nuclear localization signal signature appears at 1873 to 1881; the sequence is MRKTKLAPT. Residues 2091–2209 enclose the RdRp catalytic domain; sequence RNVWDVDYSA…ASDYDLDFEA (119 aa). Catalysis depends on Asp-2195, which acts as the For RdRp activity.

This sequence belongs to the picornaviruses polyprotein family. In terms of assembly, interacts with host ISG15. Interacts (via R-G-D motif) with host ITGAV/ITGB6. Interacts with host MAVS; this interaction inhibits binding of host TRAF3 to MAVS, thereby suppressing interferon-mediated responses. As to quaternary structure, forms homooligomers. In terms of assembly, homohexamer. Interacts with host VIM. Interacts with host BECN1. Interacts with host DCTN3. As to quaternary structure, interacts with RNA-dependent RNA polymerase; this interaction allows 3B-1 to binds 2 polymerases and act as a primer. It also allows the recruitment of the RNA-dependent RNA polymerase to host membranes. In terms of assembly, interacts with RNA-dependent RNA polymerase; this interaction allows 3B-2 to act as a primer. Interacts with RNA-dependent RNA polymerase; this interaction allows 3B-3 to act as a primer. As to quaternary structure, interacts with 3B-1; this interaction allows 3B-1 to binds 2 polymerases and act as a primer. It also allows the recruitment of the RNA-dependent RNA polymerase to host membranes. Interacts with 3B-2; this interaction allows 3B-2 to act as a primer. Interacts with 3B-3; this interaction allows 3B-3 to act as a primer. Post-translationally, removes six residues from its own C-terminus, generating sLb(pro). In terms of processing, specific enzymatic cleavages in vivo by the viral proteases yield a variety of precursors and mature proteins. The polyprotein seems to be cotranslationally cleaved at the 2A/2B junction by a ribosomal skip from one codon to the next without formation of a peptide bond. This process would release the L-P1-2A peptide from the translational complex. During virion maturation, immature virions are rendered infectious following cleavage of VP0 into VP4 and VP2. This maturation seems to be an autocatalytic event triggered by the presence of RNA in the capsid and is followed by a conformational change of the particle. Post-translationally, myristoylation is required during RNA encapsidation and formation of the mature virus particle. In terms of processing, uridylylated by the polymerase and covalently linked to the 5'-end of genomic RNA. These uridylylated forms act as a nucleotide-peptide primer for the polymerase.

It localises to the host nucleus. Its subcellular location is the host cytoplasm. The protein localises to the virion. It is found in the host endoplasmic reticulum membrane. The protein resides in the host cytoplasmic vesicle membrane. It carries out the reaction Autocatalytically cleaves itself from the polyprotein of the foot-and-mouth disease virus by hydrolysis of a Lys-|-Gly bond, but then cleaves host cell initiation factor eIF-4G at bonds -Gly-|-Arg- and -Lys-|-Arg-.. The enzyme catalyses a ribonucleoside 5'-triphosphate + H2O = a ribonucleoside 5'-diphosphate + phosphate + H(+). It catalyses the reaction RNA(n) + a ribonucleoside 5'-triphosphate = RNA(n+1) + diphosphate. The catalysed reaction is Selective cleavage of Gln-|-Gly bond in the poliovirus polyprotein. In other picornavirus reactions Glu may be substituted for Gln, and Ser or Thr for Gly.. In terms of biological role, autocatalytically cleaves itself from the polyprotein at the L/VP0 junction. Also cleaves the host translation initiation factors EIF4G1 and EIF4G3, in order to shut off the capped cellular mRNA transcription. Plays a role in counteracting host innate antiviral response using diverse mechanisms. Possesses a deubiquitinase activity acting on both 'Lys-48' and 'Lys-63'-linked polyubiquitin chains. In turn, inhibits the ubiquitination and subsequent activation of key signaling molecules of type I IFN response such as host RIGI, TBK1, TRAF3 and TRAF6. Inhibits host NF-kappa-B activity by inducing a decrease in RELA mRNA levels. Cleaves a peptide bond in the C-terminus of host ISG15, resulting in the damaging of this modifier that can no longer be attached to target proteins. Also cleaves host G3BP1 and G3BP2 in order to inhibit cytoplasmic stress granules assembly. Functionally, lies on the inner surface of the capsid shell. After binding to the host receptor, the capsid undergoes conformational changes. Capsid protein VP4 is released, capsid protein VP1 N-terminus is externalized, and together, they shape a pore in the host membrane through which the viral genome is translocated into the host cell cytoplasm. After genome has been released, the channel shrinks. Its function is as follows. Forms an icosahedral capsid of pseudo T=3 symmetry with capsid proteins VP1 and VP3. The capsid is composed of 60 copies of each capsid protein organized in the form of twelve pentamers and encloses the viral positive strand RNA genome. Upon acidifcation in the endosome, dissociates into pentamers. Forms an icosahedral capsid of pseudo T=3 symmetry with capsid proteins VP0 and VP3. The capsid is composed of 60 copies of each capsid protein organized in the form of twelve pentamers and encloses the viral positive strand RNA genome. Upon acidifcation in the endosome, dissociates into pentamers. In terms of biological role, forms an icosahedral capsid of pseudo T=3 symmetry with capsid proteins VP2 and VP3. The capsid is composed of 60 copies of each capsid protein organized in the form of twelve pentamers and encloses the viral positive strand RNA genome. Mediates cell entry by attachment to an integrin receptor, usually host ITGAV/ITGB6. In addition, targets host MAVS to suppress type I IFN pathway. Upon acidifcation in the endosome, dissociates into pentamers. Functionally, mediates self-processing of the polyprotein by a translational effect termed 'ribosome skipping'. Mechanistically, 2A-mediated cleavage occurs between the C-terminal glycine and the proline of the downstream protein 2B. In the case of foot-and-mouth disease virus, the 2A oligopeptide is post-translationally 'trimmed' from the C-terminus of the upstream protein 1D by 3C proteinase. Its function is as follows. Plays an essential role in the virus replication cycle by acting as a viroporin. Creates a pore in the host endoplasmic reticulum and as a consequence releases Ca2+ in the cytoplasm of infected cell. In turn, high levels of cytoplasmic calcium may trigger membrane trafficking and transport of viral ER-associated proteins to viroplasms, sites of viral genome replication. Associates with and induces structural rearrangements of intracellular membranes. Triggers host autophagy by interacting with host BECN1 and thereby promotes viral replication. Participates in viral replication and interacts with host DHX9. Displays RNA-binding, nucleotide binding and NTPase activities. May play a role in virion morphogenesis and viral RNA encapsidation by interacting with the capsid protein VP3. In terms of biological role, plays important roles in virus replication, virulence and host range. Cooperates with host DDX56 to inhibit IRF3 nuclear translocation and subsequent type I interferon production. Functionally, covalently linked to the 5'-end of both the positive-strand and negative-strand genomic RNAs. Acts as a genome-linked replication primer. Its function is as follows. Cysteine protease that generates mature viral proteins from the precursor polyprotein. In addition to its proteolytic activity, binds to viral RNA and thus influences viral genome replication. RNA and substrate bind cooperatively to the protease. RNA-directed RNA polymerase 3D-POL replicates genomic and antigenomic RNA by recognizing replications specific signals. Covalently attaches UMP to a tyrosine of VPg, which is used to prime RNA synthesis. The positive stranded RNA genome is first replicated at virus induced membranous vesicles, creating a dsRNA genomic replication form. This dsRNA is then used as template to synthesize positive stranded RNA genomes. ss(+)RNA genomes are either translated, replicated or encapsidated. The sequence is that of Genome polyprotein from Bos taurus (Bovine).